The following is a 327-amino-acid chain: Vacuolar protein sorting-associated protein 26A (327 aa).

The tract at residues 306–327 (RTNFHQRFESPDSQASAEQPEM) is disordered. Ser-315 is subject to Phosphoserine. Residues 316–327 (PDSQASAEQPEM) show a composition bias toward polar residues.

Belongs to the VPS26 family. As to quaternary structure, component of the heterotrimeric retromer cargo-selective complex (CSC), also described as vacuolar protein sorting subcomplex (VPS), formed by VPS26 (VPS26A or VPS26B), VPS29 and VPS35. The CSC has a highly elongated structure with VPS26 and VPS29 binding independently at opposite distal ends of VPS35 as central platform. The CSC is believed to associate with variable sorting nexins to form functionally distinct retromer complex variants. The originally described retromer complex (also called SNX-BAR retromer) is a pentamer containing the CSC and a heterodimeric membrane-deforming subcomplex formed between SNX1 or SNX2 and SNX5 or SNX6 (also called SNX-BAR subcomplex); the respective CSC and SNX-BAR subcomplexes associate with low affinity. The CSC associates with SNX3 to form a SNX3-retromer complex. The CSC associates with SNX27, the WASH complex and the SNX-BAR subcomplex to form the SNX27-retromer complex. Interacts with VPS29, VPS35, SNX27. Interacts with SNX1, SNX2, SNX5, SNX6, SNX3, RAB7A, ECPAS, EHD1, WASHC5, SORL1.

It localises to the cytoplasm. It is found in the endosome membrane. Its subcellular location is the early endosome. In terms of biological role, acts as a component of the retromer cargo-selective complex (CSC). The CSC is believed to be the core functional component of retromer or respective retromer complex variants acting to prevent missorting of selected transmembrane cargo proteins into the lysosomal degradation pathway. The recruitment of the CSC to the endosomal membrane involves RAB7A and SNX3. The SNX-BAR retromer mediates retrograde transport of cargo proteins from endosomes to the trans-Golgi network (TGN) and is involved in endosome-to-plasma membrane transport for cargo protein recycling. The SNX3-retromer mediates the retrograde endosome-to-TGN transport of WLS distinct from the SNX-BAR retromer pathway. The SNX27-retromer is believed to be involved in endosome-to-plasma membrane trafficking and recycling of a broad spectrum of cargo proteins. The CSC complex seems to act as recruitment hub for other proteins, such as the WASH complex and TBC1D5. Required for retrograde transport of lysosomal enzyme receptor IGF2R. Required to regulate transcytosis of the polymeric immunoglobulin receptor (pIgR-pIgA). Required for the endosomal localization of WASHC2 (indicative for the WASH complex). Required for the endosomal localization of TBC1D5. Mediates retromer cargo recognition of SORL1 and is involved in trafficking of SORL1 implicated in sorting and processing of APP. Involved in retromer-independent lysosomal sorting of F2R. Involved in recycling of ADRB2. Acts redundantly with VSP26B in SNX-27 mediated endocytic recycling of SLC2A1/GLUT1. Enhances the affinity of SNX27 for PDZ-binding motifs in cargo proteins. This is Vacuolar protein sorting-associated protein 26A (Vps26a) from Mus musculus (Mouse).